The sequence spans 292 residues: tRNA pseudouridine synthase B (292 aa).

The active-site Nucleophile is Asp-38.

The protein belongs to the pseudouridine synthase TruB family. Type 1 subfamily.

It carries out the reaction uridine(55) in tRNA = pseudouridine(55) in tRNA. Functionally, responsible for synthesis of pseudouridine from uracil-55 in the psi GC loop of transfer RNAs. The chain is tRNA pseudouridine synthase B from Gloeobacter violaceus (strain ATCC 29082 / PCC 7421).